Here is a 432-residue protein sequence, read N- to C-terminus: Amino-acid acetyltransferase (432 aa).

The N-acetyltransferase domain maps to 286–425 (EQLREAGIED…ASLYNFQRNS (140 aa)).

It belongs to the acetyltransferase family. ArgA subfamily.

It localises to the cytoplasm. The catalysed reaction is L-glutamate + acetyl-CoA = N-acetyl-L-glutamate + CoA + H(+). The protein operates within amino-acid biosynthesis; L-arginine biosynthesis; N(2)-acetyl-L-ornithine from L-glutamate: step 1/4. The protein is Amino-acid acetyltransferase of Pseudomonas paraeruginosa (strain DSM 24068 / PA7) (Pseudomonas aeruginosa (strain PA7)).